A 691-amino-acid chain; its full sequence is MVNVFVDGLSVEVKKGATILQACAQVGIEIPRFCYHERLSIAGNCRMCLVEVEKSPKPVASCAMPVMDNMKIFTNTPLVKKAREGVLEFLLVNHPLDCPICDQGGECDLQDLTMVYGSDRGRFHEYKRGVEDKNIGPLVKTVMTRCIHCTRCVRFATEVAGVPDLGTVGRGRDTEISTYIQKVFNSELSGNVIDLCPVGALTSKPYAFTARSWELQSTESIDVSDAIGSNIRIDVRGSEIMRILPRLNEDVNEEWISDKARFCYDGLKRQRLNNPIIKENGQYKTVTWEKAFNFILKNLQEIQNSNRIVGVVGNLMDVESILLFKELLNKLGSSKIYLESSTPILQLNDDEKEDQILNNADFRNNYISNTPLAKIEESDLCLLIGTNIRLEAPLLNTRIRKRYLQGNYSVYSVGPTNNLTYNTENLGNDISTLLEISEGRHPFCKKLMKSKKPLIIIGTHVLQRTDGTSIIELVKTLFKYTQIKTSNWNGFNILHTSASSVGALDLGIGSTKRYSEKISNSKIEKHFIYLLGADEIRIENSKEHFIVYQGHHGDYGANIADVILPGSAYTEKTATYVNVEGRVQNTKSAFYAPGNAREDWKIIRALSEVLNKKLPYDSFEDIHTRFMSIAPHLLKVNAIEKNKIVIENSLPFKGLIKNIGFKPLFNNFYLTNAICRSSQTMAKCSSIYKLN.

A 2Fe-2S ferredoxin-type domain is found at 1 to 78 (MVNVFVDGLS…NMKIFTNTPL (78 aa)). [2Fe-2S] cluster-binding residues include C34, C45, C48, and C62. Residues 78-117 (LVKKAREGVLEFLLVNHPLDCPICDQGGECDLQDLTMVYG) form the 4Fe-4S His(Cys)3-ligated-type domain. H94, C98, C101, C107, C146, C149, C152, and C196 together coordinate [4Fe-4S] cluster. The 57-residue stretch at 215 to 271 (LQSTESIDVSDAIGSNIRIDVRGSEIMRILPRLNEDVNEEWISDKARFCYDGLKRQR) folds into the 4Fe-4S Mo/W bis-MGD-type domain.

Belongs to the complex I 75 kDa subunit family. As to quaternary structure, complex I is composed of about 30 different subunits. The cofactor is [2Fe-2S] cluster. Requires [4Fe-4S] cluster as cofactor.

The protein localises to the mitochondrion inner membrane. It catalyses the reaction a ubiquinone + NADH + 5 H(+)(in) = a ubiquinol + NAD(+) + 4 H(+)(out). Its function is as follows. Core subunit of the mitochondrial membrane respiratory chain NADH dehydrogenase (Complex I) that is believed to belong to the minimal assembly required for catalysis. Complex I functions in the transfer of electrons from NADH to the respiratory chain. The immediate electron acceptor for the enzyme is believed to be ubiquinone. This is the largest subunit of complex I and it is a component of the iron-sulfur (IP) fragment of the enzyme. It may form part of the active site crevice where NADH is oxidized. The protein is NADH-ubiquinone oxidoreductase 75 kDa subunit (NAD11) of Reclinomonas americana.